Reading from the N-terminus, the 137-residue chain is Protein BNS1 (137 aa).

Its function is as follows. Component of the FEAR (CDC14 early anaphase release) network which promotes CDC14 release from the nucleolus during early anaphase and is required for the efficient segregation of telomeric and nucleolar regions. Although BNS1 can partially compensate for a lack of SPO12 function when overexpressed, it does not appear to play any role in controlling meiotic nuclear division. This chain is Protein BNS1 (BNS1), found in Saccharomyces cerevisiae (strain ATCC 204508 / S288c) (Baker's yeast).